The following is a 111-amino-acid chain: Probable 4-amino-4-deoxy-L-arabinose-phosphoundecaprenol flippase subunit ArnE (111 aa).

3 helical membrane passes run 38–58 (LWLG…LLVL), 61–81 (LPVG…TLAA), and 91–111 (PRHW…GSAA). Residues 40–109 (LGLALICMGA…IISGIIILGS (70 aa)) enclose the EamA domain.

It belongs to the ArnE family. In terms of assembly, heterodimer of ArnE and ArnF.

It is found in the cell inner membrane. It participates in bacterial outer membrane biogenesis; lipopolysaccharide biosynthesis. Functionally, translocates 4-amino-4-deoxy-L-arabinose-phosphoundecaprenol (alpha-L-Ara4N-phosphoundecaprenol) from the cytoplasmic to the periplasmic side of the inner membrane. This chain is Probable 4-amino-4-deoxy-L-arabinose-phosphoundecaprenol flippase subunit ArnE, found in Salmonella newport (strain SL254).